Reading from the N-terminus, the 441-residue chain is Protein translocase subunit SecY (441 aa).

A run of 10 helical transmembrane segments spans residues Ile-18–Gly-38, Ala-78–Ile-98, Ile-124–Leu-144, Ile-157–Met-177, Leu-180–Ala-200, Gly-215–Val-235, Val-272–Ile-292, Leu-318–Ile-338, Ile-382–Thr-402, and Val-403–Thr-423.

This sequence belongs to the SecY/SEC61-alpha family. Component of the Sec protein translocase complex. Heterotrimer consisting of SecY, SecE and SecG subunits. The heterotrimers can form oligomers, although 1 heterotrimer is thought to be able to translocate proteins. Interacts with the ribosome. Interacts with SecDF, and other proteins may be involved. Interacts with SecA.

It localises to the cell membrane. The central subunit of the protein translocation channel SecYEG. Consists of two halves formed by TMs 1-5 and 6-10. These two domains form a lateral gate at the front which open onto the bilayer between TMs 2 and 7, and are clamped together by SecE at the back. The channel is closed by both a pore ring composed of hydrophobic SecY resides and a short helix (helix 2A) on the extracellular side of the membrane which forms a plug. The plug probably moves laterally to allow the channel to open. The ring and the pore may move independently. The protein is Protein translocase subunit SecY of Mycobacterium bovis (strain ATCC BAA-935 / AF2122/97).